A 486-amino-acid polypeptide reads, in one-letter code: UDP-GalNAc:beta-1,3-N-acetylgalactosaminyltransferase 2 (486 aa).

The Cytoplasmic segment spans residues 1–10 (MRHLLFLCPC). The chain crosses the membrane as a helical; Signal-anchor for type II membrane protein span at residues 11–31 (VIGVAFHLWLFNFSGLFSWFL). The Lumenal portion of the chain corresponds to 32 to 486 (VWSPHSYDIV…CGNPCACEDR (455 aa)). Asn103 and Asn160 each carry an N-linked (GlcNAc...) asparagine glycan.

The protein belongs to the glycosyltransferase 31 family.

The protein resides in the golgi apparatus membrane. The protein localises to the endoplasmic reticulum. The enzyme catalyses 3-O-(N-acetyl-beta-D-glucosaminyl-(1-&gt;4)-alpha-D-mannosyl)-L-threonyl-[protein] + UDP-N-acetyl-alpha-D-galactosamine = 3-O-[beta-D-GalNAc-(1-&gt;3)-beta-D-GlcNAc-(1-&gt;4)-alpha-D-Man]-L-Thr-[protein] + UDP + H(+). It participates in protein modification; protein glycosylation. Beta-1,3-N-acetylgalactosaminyltransferase that synthesizes a unique carbohydrate structure, GalNAc-beta-1-3GlcNAc, on N- and O-glycans. Has no galactose nor galactosaminyl transferase activity toward any acceptor substrate. Involved in alpha-dystroglycan (dag1) glycosylation. The sequence is that of UDP-GalNAc:beta-1,3-N-acetylgalactosaminyltransferase 2 (b3galnt2) from Xenopus laevis (African clawed frog).